Here is a 507-residue protein sequence, read N- to C-terminus: ATP synthase subunit alpha, chloroplastic (507 aa).

Residue 170–177 (GDRQTGKT) coordinates ATP.

The protein belongs to the ATPase alpha/beta chains family. F-type ATPases have 2 components, CF(1) - the catalytic core - and CF(0) - the membrane proton channel. CF(1) has five subunits: alpha(3), beta(3), gamma(1), delta(1), epsilon(1). CF(0) has four main subunits: a, b, b' and c.

The protein localises to the plastid. The protein resides in the chloroplast thylakoid membrane. The catalysed reaction is ATP + H2O + 4 H(+)(in) = ADP + phosphate + 5 H(+)(out). Its function is as follows. Produces ATP from ADP in the presence of a proton gradient across the membrane. The alpha chain is a regulatory subunit. The sequence is that of ATP synthase subunit alpha, chloroplastic from Physcomitrium patens (Spreading-leaved earth moss).